The sequence spans 263 residues: HTH-type transcriptional repressor NanR (263 aa).

Residues 1 to 22 (MGLMNAFDSQTEDSSPAIGRNL) form a disordered region. The region spanning 30–98 (KKLSEMVEEE…NGERARVSRP (69 aa)) is the HTH gntR-type domain. Residues 58–77 (ERELMAFFNVGRPSVREALA) constitute a DNA-binding region (H-T-H motif).

This sequence belongs to the NanR family.

Transcriptional repressor that controls expression of the genes required for the catabolism of sialic acids. The chain is HTH-type transcriptional repressor NanR from Shigella dysenteriae serotype 1 (strain Sd197).